We begin with the raw amino-acid sequence, 360 residues long: Phenylalanine--tRNA ligase alpha subunit (360 aa).

Glutamate 260 contributes to the Mg(2+) binding site.

It belongs to the class-II aminoacyl-tRNA synthetase family. Phe-tRNA synthetase alpha subunit type 1 subfamily. Tetramer of two alpha and two beta subunits. It depends on Mg(2+) as a cofactor.

Its subcellular location is the cytoplasm. It carries out the reaction tRNA(Phe) + L-phenylalanine + ATP = L-phenylalanyl-tRNA(Phe) + AMP + diphosphate + H(+). The protein is Phenylalanine--tRNA ligase alpha subunit of Bradyrhizobium sp. (strain ORS 278).